A 508-amino-acid polypeptide reads, in one-letter code: Catalase (508 aa).

Residues His63 and Asn136 contribute to the active site. Tyr346 contributes to the heme binding site.

Belongs to the catalase family. As to quaternary structure, homohexamer. The cofactor is heme.

It localises to the cytoplasm. The enzyme catalyses 2 H2O2 = O2 + 2 H2O. Its function is as follows. Decomposes hydrogen peroxide into water and oxygen; serves to protect cells from the toxic effects of hydrogen peroxide. The chain is Catalase (katA) from Haemophilus influenzae (strain ATCC 51907 / DSM 11121 / KW20 / Rd).